We begin with the raw amino-acid sequence, 516 residues long: Glucose-1-phosphate adenylyltransferase large subunit 1, chloroplastic/amyloplastic (516 aa).

The transit peptide at 1–45 directs the protein to the chloroplast; it reads MQFALALDTNSGPHQIRSCEGDGIDRLEKLSIGGRKQEKALRNRC.

It belongs to the bacterial/plant glucose-1-phosphate adenylyltransferase family. In terms of assembly, heterotetramer. In terms of tissue distribution, endosperm.

It localises to the plastid. Its subcellular location is the chloroplast. It is found in the amyloplast. It catalyses the reaction alpha-D-glucose 1-phosphate + ATP + H(+) = ADP-alpha-D-glucose + diphosphate. It functions in the pathway glycan biosynthesis; starch biosynthesis. With respect to regulation, activated by 3'phosphoglycerate, inhibited by orthophosphate. Allosteric regulation. In terms of biological role, this protein plays a role in synthesis of starch. It catalyzes the synthesis of the activated glycosyl donor, ADP-glucose from Glc-1-P and ATP. The polypeptide is Glucose-1-phosphate adenylyltransferase large subunit 1, chloroplastic/amyloplastic (SH2) (Zea mays (Maize)).